A 73-amino-acid polypeptide reads, in one-letter code: Putative membrane protein insertion efficiency factor (73 aa).

It belongs to the UPF0161 family.

Its subcellular location is the cell inner membrane. Could be involved in insertion of integral membrane proteins into the membrane. This Treponema denticola (strain ATCC 35405 / DSM 14222 / CIP 103919 / JCM 8153 / KCTC 15104) protein is Putative membrane protein insertion efficiency factor.